Consider the following 379-residue polypeptide: MSSRAETPRVPFLDLKAAYEELRAETDAAIARVLDSGRYLLGPELEGFEAEFAAYCETDHAVGVNSGMDALQLALRGLGIGPGDEVIVPSHTYIASWLAVSATGATPVPVEPHEDHPTLDPLLVEKAITPRTRALLPVHLYGHPADMDALRELADRHGLHIVEDAAQAHGARYRGRRIGAGSSVAAFSFYPGKNLGCFGDGGAVVTGDPELAERLRMLRNYGSRQKYSHETKGTNSRLDEMQAAVLRIRLAHLDSWNGRRSALAAEYLSGLAGLPGIGLPVTAPDTDPVWHLFTVRTERRDELRSHLDARGIDTLTHYPVPVHLSPAYAGEAPPEGSLPRAESFARQVLSLPIGPHLERPQALRVIDAVREWAERVDQA.

Pyridoxal 5'-phosphate is bound by residues glycine 67, glutamine 167, 188 to 193 (SFYPGK), tyrosine 221, tyrosine 227, 235 to 237 (NSR), and tyrosine 318. Lysine 193 carries the N6-(pyridoxal phosphate)lysine modification.

Belongs to the degT/dnrJ/eryC1 family. As to quaternary structure, homodimer. The cofactor is pyridoxal 5'-phosphate.

It carries out the reaction dTDP-3-amino-3,4,6-trideoxy-alpha-D-glucose + 2-oxoglutarate = dTDP-3-dehydro-4,6-dideoxy-alpha-D-glucose + L-glutamate. Its pathway is antibiotic biosynthesis. Involved in the biosynthesis of dTDP-alpha-D-desosamine, a sugar found in several bacterial macrolide antibiotics. Catalyzes the reversible transfer of the amino group from L-glutamate to the C-3 position of dTDP-3-keto-4,6-deoxyglucose to yield dTDP-3-amino-3,4,6-trideoxyglucose. The protein is dTDP-3-amino-3,4,6-trideoxy-alpha-D-glucose transaminase of Streptomyces venezuelae.